The chain runs to 339 residues: UDP-N-acetylglucosamine--N-acetylmuramyl-(pentapeptide) pyrophosphoryl-undecaprenol N-acetylglucosamine transferase (339 aa).

Residues 11 to 13, Asn127, Arg170, Ser188, Ile235, and Gln280 each bind UDP-N-acetyl-alpha-D-glucosamine; that span reads TGG.

It belongs to the glycosyltransferase 28 family. MurG subfamily.

The protein localises to the cell inner membrane. It catalyses the reaction di-trans,octa-cis-undecaprenyl diphospho-N-acetyl-alpha-D-muramoyl-L-alanyl-D-glutamyl-meso-2,6-diaminopimeloyl-D-alanyl-D-alanine + UDP-N-acetyl-alpha-D-glucosamine = di-trans,octa-cis-undecaprenyl diphospho-[N-acetyl-alpha-D-glucosaminyl-(1-&gt;4)]-N-acetyl-alpha-D-muramoyl-L-alanyl-D-glutamyl-meso-2,6-diaminopimeloyl-D-alanyl-D-alanine + UDP + H(+). It functions in the pathway cell wall biogenesis; peptidoglycan biosynthesis. Functionally, cell wall formation. Catalyzes the transfer of a GlcNAc subunit on undecaprenyl-pyrophosphoryl-MurNAc-pentapeptide (lipid intermediate I) to form undecaprenyl-pyrophosphoryl-MurNAc-(pentapeptide)GlcNAc (lipid intermediate II). This is UDP-N-acetylglucosamine--N-acetylmuramyl-(pentapeptide) pyrophosphoryl-undecaprenol N-acetylglucosamine transferase from Thermotoga neapolitana (strain ATCC 49049 / DSM 4359 / NBRC 107923 / NS-E).